The following is a 326-amino-acid chain: Malate dehydrogenase (326 aa).

Residue 11–17 coordinates NAD(+); it reads GAAGQIG. Residues Arg-92 and Arg-98 each coordinate substrate. Residues Asn-105, Gln-112, and 129–131 each bind NAD(+); that span reads VGN. Residues Asn-131 and Arg-162 each contribute to the substrate site. The active-site Proton acceptor is the His-187.

The protein belongs to the LDH/MDH superfamily. MDH type 2 family.

The enzyme catalyses (S)-malate + NAD(+) = oxaloacetate + NADH + H(+). Functionally, catalyzes the reversible oxidation of malate to oxaloacetate. The sequence is that of Malate dehydrogenase from Leptospira borgpetersenii serovar Hardjo-bovis (strain JB197).